We begin with the raw amino-acid sequence, 618 residues long: Protease 4 (618 aa).

The Cytoplasmic portion of the chain corresponds to 1–24 (MRTLWRFIAGFFKWTWRVLNFVRE). A helical transmembrane segment spans residues 25-45 (MVLNLFFIFLVLVGVGIWMQI). Residues 46 to 618 (GNGSNSEQTA…AFCLTCANVR (573 aa)) lie on the Periplasmic side of the membrane. Catalysis depends on Lys-209, which acts as the Proton donor/acceptor. Ser-409 (nucleophile) is an active-site residue.

Belongs to the peptidase S49 family. Homotetramer.

It is found in the cell inner membrane. Digests cleaved signal peptides in vitro, its in vivo function is unknown. This activity is necessary to maintain proper secretion of mature proteins across the membrane. The sequence is that of Protease 4 (sppA) from Salmonella typhi.